The following is a 101-amino-acid chain: uncharacterized protein (101 aa).

Residues 68-90 (LAFAFCGRANTFISCFISFASLI) traverse the membrane as a helical segment.

It is found in the membrane. This is an uncharacterized protein from Saccharomyces cerevisiae (strain ATCC 204508 / S288c) (Baker's yeast).